A 363-amino-acid polypeptide reads, in one-letter code: Phosphoribosylformylglycinamidine cyclo-ligase (363 aa).

Belongs to the AIR synthase family.

The protein resides in the cytoplasm. The catalysed reaction is 2-formamido-N(1)-(5-O-phospho-beta-D-ribosyl)acetamidine + ATP = 5-amino-1-(5-phospho-beta-D-ribosyl)imidazole + ADP + phosphate + H(+). It participates in purine metabolism; IMP biosynthesis via de novo pathway; 5-amino-1-(5-phospho-D-ribosyl)imidazole from N(2)-formyl-N(1)-(5-phospho-D-ribosyl)glycinamide: step 2/2. The protein is Phosphoribosylformylglycinamidine cyclo-ligase of Bartonella tribocorum (strain CIP 105476 / IBS 506).